We begin with the raw amino-acid sequence, 275 residues long: 4-hydroxy-tetrahydrodipicolinate reductase (275 aa).

Residues 13-18 (GAAGKM) and 108-110 (GTT) contribute to the NAD(+) site. H164 (proton donor/acceptor) is an active-site residue. A (S)-2,3,4,5-tetrahydrodipicolinate-binding site is contributed by H165. K168 (proton donor) is an active-site residue. 174 to 175 (GT) is a (S)-2,3,4,5-tetrahydrodipicolinate binding site.

This sequence belongs to the DapB family.

It localises to the cytoplasm. The enzyme catalyses (S)-2,3,4,5-tetrahydrodipicolinate + NAD(+) + H2O = (2S,4S)-4-hydroxy-2,3,4,5-tetrahydrodipicolinate + NADH + H(+). It catalyses the reaction (S)-2,3,4,5-tetrahydrodipicolinate + NADP(+) + H2O = (2S,4S)-4-hydroxy-2,3,4,5-tetrahydrodipicolinate + NADPH + H(+). It functions in the pathway amino-acid biosynthesis; L-lysine biosynthesis via DAP pathway; (S)-tetrahydrodipicolinate from L-aspartate: step 4/4. Catalyzes the conversion of 4-hydroxy-tetrahydrodipicolinate (HTPA) to tetrahydrodipicolinate. This Rippkaea orientalis (strain PCC 8801 / RF-1) (Cyanothece sp. (strain PCC 8801)) protein is 4-hydroxy-tetrahydrodipicolinate reductase.